Reading from the N-terminus, the 347-residue chain is NADH-ubiquinone oxidoreductase chain 2 (347 aa).

11 helical membrane-spanning segments follow: residues 1–21 (MNPM…FIVT), 25–45 (HWFM…PVLM), 59–79 (YFLT…INLM), 96–116 (MLIT…FWVP), 122–142 (VSLP…LSLL), 149–169 (VNMN…GWGG), 178–198 (IMAY…VYNP), 201–221 (SLLN…LLIF), 237–257 (APII…LPPL), 274–294 (NSVI…FFYM), and 326–346 (MLPL…LILL).

It belongs to the complex I subunit 2 family. Core subunit of respiratory chain NADH dehydrogenase (Complex I) which is composed of 45 different subunits. Interacts with TMEM242.

Its subcellular location is the mitochondrion inner membrane. It catalyses the reaction a ubiquinone + NADH + 5 H(+)(in) = a ubiquinol + NAD(+) + 4 H(+)(out). Functionally, core subunit of the mitochondrial membrane respiratory chain NADH dehydrogenase (Complex I) that is believed to belong to the minimal assembly required for catalysis. Complex I functions in the transfer of electrons from NADH to the respiratory chain. The immediate electron acceptor for the enzyme is believed to be ubiquinone. The sequence is that of NADH-ubiquinone oxidoreductase chain 2 from Crocidura suaveolens gueldenstaedtii (Gueldenstaedt's shrew).